Reading from the N-terminus, the 145-residue chain is Ribosome maturation factor RimP (145 aa).

Belongs to the RimP family.

Its subcellular location is the cytoplasm. Required for maturation of 30S ribosomal subunits. This Borrelia garinii subsp. bavariensis (strain ATCC BAA-2496 / DSM 23469 / PBi) (Borreliella bavariensis) protein is Ribosome maturation factor RimP.